The sequence spans 341 residues: 4-amino-5-hydroxymethyl-2-methylpyrimidine phosphate synthase (341 aa).

An N6-(pyridoxal phosphate)lysine modification is found at lysine 62. The active site involves histidine 66. A pyridoxal 5'-phosphate-binding site is contributed by 115–118 (GEFG). A CCCFC; essential for catalytic activity, may be the site of iron coordination motif is present at residues 195–199 (CCCFC).

This sequence belongs to the NMT1/THI5 family. In terms of assembly, homodimer. Fe cation is required as a cofactor.

The catalysed reaction is N(6)-(pyridoxal phosphate)-L-lysyl-[4-amino-5-hydroxymethyl-2-methylpyrimidine phosphate synthase] + L-histidyl-[4-amino-5-hydroxymethyl-2-methylpyrimidine phosphate synthase] + 2 Fe(3+) + 4 H2O = L-lysyl-[4-amino-5-hydroxymethyl-2-methylpyrimidine phosphate synthase] + (2S)-2-amino-5-hydroxy-4-oxopentanoyl-[4-amino-5-hydroxymethyl-2-methylpyrimidine phosphate synthase] + 4-amino-2-methyl-5-(phosphooxymethyl)pyrimidine + 3-oxopropanoate + 2 Fe(2+) + 2 H(+). Its pathway is cofactor biosynthesis; thiamine diphosphate biosynthesis. Functionally, responsible for the formation of the pyrimidine heterocycle in the thiamine biosynthesis pathway. Catalyzes the formation of hydroxymethylpyrimidine phosphate (HMP-P) from histidine and pyridoxal phosphate (PLP). The protein uses PLP and the active site histidine to form HMP-P, generating an inactive enzyme. The enzyme can only undergo a single turnover, which suggests it is a suicide enzyme. The polypeptide is 4-amino-5-hydroxymethyl-2-methylpyrimidine phosphate synthase (Uromyces fabae (Rust fungus)).